The chain runs to 281 residues: 2-dehydro-3-deoxyphosphooctonate aldolase (281 aa).

Belongs to the KdsA family.

The protein localises to the cytoplasm. The enzyme catalyses D-arabinose 5-phosphate + phosphoenolpyruvate + H2O = 3-deoxy-alpha-D-manno-2-octulosonate-8-phosphate + phosphate. The protein operates within carbohydrate biosynthesis; 3-deoxy-D-manno-octulosonate biosynthesis; 3-deoxy-D-manno-octulosonate from D-ribulose 5-phosphate: step 2/3. It participates in bacterial outer membrane biogenesis; lipopolysaccharide biosynthesis. This Stutzerimonas stutzeri (strain A1501) (Pseudomonas stutzeri) protein is 2-dehydro-3-deoxyphosphooctonate aldolase.